Reading from the N-terminus, the 220-residue chain is Ribonuclease HII (220 aa).

The region spanning lysine 32 to cysteine 220 is the RNase H type-2 domain. Residues aspartate 38, glutamate 39, and aspartate 130 each contribute to the a divalent metal cation site.

Belongs to the RNase HII family. Mn(2+) serves as cofactor. It depends on Mg(2+) as a cofactor.

The protein localises to the cytoplasm. The catalysed reaction is Endonucleolytic cleavage to 5'-phosphomonoester.. Functionally, endonuclease that specifically degrades the RNA of RNA-DNA hybrids. In Brucella suis (strain ATCC 23445 / NCTC 10510), this protein is Ribonuclease HII.